We begin with the raw amino-acid sequence, 189 residues long: Phomopsin biosynthesis cluster protein D (189 aa).

Belongs to the oryJ family.

Functionally, part of the gene cluster that mediates the biosynthesis of the phomopsins, a group of hexapeptide mycotoxins which infects lupins and causes lupinosis disease in livestock. The role of phomC within the phomopsins biosynthesis pathway has still to be determined. The pathway starts with the processing of the precursor phomA by several endopeptidases including kexin proteases as well as the cluster-specific S41 family peptidase phomP1 and the oligopeptidase phomG to produce 10 identical copies of the hexapeptide Tyr-Val-Ile-Pro-Ile-Asp. After being excised from the precursor peptide, the core peptides are cyclized and modified post-translationally by enzymes encoded within the gene cluster. The timing and order of proteolysis of the phomA precursor and PTMs are still unknown. Two tyrosinase-like enzymes, phomQ1 and phomQ2, catalyze the chlorination and hydroxylation of Tyr, respectively. PhomYb, is proposed to be involved in the construction of the macrocyclic structure. The other 4 ustYa family proteins may be involved in PTMs that generate the unique structure of phomopsin A. PhomYa is required for the hydroxylation of C-beta of Tyr. PhomYc, phomYd, and phomYe are responsible for the biosynthesis of 2,3-dehydroisoleucine (dIle), 2,3-dehydroaspartic acid (dAsp), and 3,4-dehydroproline (dPro), respectively. While dIle formation by phomYc is indispensable for the installation of dAsp by phomYd, the order of the other PTMs have not been elucidated yet. Most of the biosynthetic enzymes likely have broad substrate specificity, and thus, there might be a metabolic grid from a precursor to phomopsin A. The enzyme(s) responsible for the biosynthesis of 3,4-dehydrovaline (dVal) have also not been identified yet. Finally, phomM acts as an S-adenosylmethionine-dependent alpha-N-methyltransferase that catalyzes two successive N-methylation reactions, converting N-desmethyl-phomopsin A to phomopsin A and phomopsin A further to an N,N-dimethylated congener called phomopsin E. The sequence is that of Phomopsin biosynthesis cluster protein D from Diaporthe leptostromiformis (Lupinosis disease fungus).